The primary structure comprises 236 residues: tRNA (guanine-N(1)-)-methyltransferase (236 aa).

Residues G114 and 134-139 (IGDYIL) contribute to the S-adenosyl-L-methionine site.

It belongs to the RNA methyltransferase TrmD family. As to quaternary structure, homodimer.

It localises to the cytoplasm. The enzyme catalyses guanosine(37) in tRNA + S-adenosyl-L-methionine = N(1)-methylguanosine(37) in tRNA + S-adenosyl-L-homocysteine + H(+). Specifically methylates guanosine-37 in various tRNAs. In Wolbachia pipientis wMel, this protein is tRNA (guanine-N(1)-)-methyltransferase.